The chain runs to 159 residues: Small ribosomal subunit protein uS7m (159 aa).

The protein belongs to the universal ribosomal protein uS7 family. Part of the small ribosomal subunit.

Its subcellular location is the mitochondrion. One of the primary rRNA binding proteins, it binds directly to the small rRNA where it nucleates assembly of the head domain of the small subunit. This Reclinomonas americana protein is Small ribosomal subunit protein uS7m (RPS7).